A 301-amino-acid polypeptide reads, in one-letter code: GTPase Era (301 aa).

The Era-type G domain occupies 7 to 175 (YCGFIAIVGR…AGIVRKHLPE (169 aa)). Positions 15 to 22 (GRPNVGKS) are G1. 15–22 (GRPNVGKS) contributes to the GTP binding site. The G2 stretch occupies residues 41–45 (QTTRH). Residues 62-65 (DTPG) are G3. GTP contacts are provided by residues 62–66 (DTPGL) and 124–127 (NKVD). The interval 124 to 127 (NKVD) is G4. Positions 154 to 156 (ISA) are G5. A KH type-2 domain is found at 206 to 283 (LGAELPYSVT…HLELWVKVKS (78 aa)).

Belongs to the TRAFAC class TrmE-Era-EngA-EngB-Septin-like GTPase superfamily. Era GTPase family. In terms of assembly, monomer.

It localises to the cytoplasm. It is found in the cell inner membrane. Its function is as follows. An essential GTPase that binds both GDP and GTP, with rapid nucleotide exchange. Plays a role in 16S rRNA processing and 30S ribosomal subunit biogenesis and possibly also in cell cycle regulation and energy metabolism. This Salmonella paratyphi B (strain ATCC BAA-1250 / SPB7) protein is GTPase Era.